A 410-amino-acid polypeptide reads, in one-letter code: FAS1 domain-containing protein CaO19.3004 (410 aa).

A signal peptide spans 1 to 18; it reads MKLSKLLQLAVFSSLVTS. 2 stretches are compositionally biased toward basic and acidic residues: residues 64-73 and 83-96; these read NAKFKRDPKN and GSAE…REPK. A disordered region spans residues 64-98; the sequence is NAKFKRDPKNVIDPASLKEGSAEEEQKDKREPKNL. Residues 247-407 form the FAS1 domain; sequence NNLLQSILPQ…GFVLIINDSL (161 aa).

Its subcellular location is the vacuole. The protein is FAS1 domain-containing protein CaO19.3004 of Candida albicans (strain SC5314 / ATCC MYA-2876) (Yeast).